Reading from the N-terminus, the 93-residue chain is CRISPR-associated endoribonuclease Cas2 2 (93 aa).

D9 contacts Mg(2+).

This sequence belongs to the CRISPR-associated endoribonuclease Cas2 protein family. As to quaternary structure, homodimer, forms a heterotetramer with a Cas1 homodimer. Mg(2+) is required as a cofactor.

CRISPR (clustered regularly interspaced short palindromic repeat), is an adaptive immune system that provides protection against mobile genetic elements (viruses, transposable elements and conjugative plasmids). CRISPR clusters contain sequences complementary to antecedent mobile elements and target invading nucleic acids. CRISPR clusters are transcribed and processed into CRISPR RNA (crRNA). Functions as a ssRNA-specific endoribonuclease. Involved in the integration of spacer DNA into the CRISPR cassette. The polypeptide is CRISPR-associated endoribonuclease Cas2 2 (Synechocystis sp. (strain ATCC 27184 / PCC 6803 / Kazusa)).